A 198-amino-acid polypeptide reads, in one-letter code: Recombination protein RecR (198 aa).

Residues 57–72 (CAMCNTFTEHEVCETC) form a C4-type zinc finger. The Toprim domain occupies 80-175 (ALLCVVETPG…KVSRLARGVP (96 aa)).

Belongs to the RecR family.

Its function is as follows. May play a role in DNA repair. It seems to be involved in an RecBC-independent recombinational process of DNA repair. It may act with RecF and RecO. This is Recombination protein RecR from Janthinobacterium sp. (strain Marseille) (Minibacterium massiliensis).